A 408-amino-acid polypeptide reads, in one-letter code: MERAVKENHKPSNVKVFHPMTEGPKRIPVSQPPSTQVRPPVTGVSAQRILGPSNVPQRVMMQAQKPVLSNQKPTAQGLLRPATHGHQTSKPQGPNENRNPQQTSHSSTPNMEKKGSTDQGKTLAVPKEEGKKKQWCLEDFEIGRPLGKGKFGNVYLARERESKFILALKVLFKSQLEKAGVEHQLRREVEIQSHLRHPNILRLYGYFHDACRVYLILDYAPGGELFRELQKCTRFDDQRSALYIKQLAEALLYCHSKKVIHRDIKPENLLLGSNGELKIADFGWSVHAPSSRRTTLCGTLDYLPPEMIEGRMHDEKVDLWSLGVLCYEFLVGKPPFETDTHQETYRRISKVEFQYPPYVSEEAKDLVSKLLKHNPNHRLPLKGVLEHPWIVKNSQQPKKKDEPLAGAQ.

The segment covering M1–K10 has biased composition (basic and acidic residues). The tract at residues M1 to E128 is disordered. Over residues G85–N110 the composition is skewed to polar residues. Positions F140 to I390 constitute a Protein kinase domain. Residues K150, K169, and L217–A220 each bind ATP. D263 serves as the catalytic Proton acceptor. D281 contacts ATP. Residues H287–L300 form an activation segment region.

It belongs to the protein kinase superfamily. Ser/Thr protein kinase family. Aurora subfamily. In terms of assembly, interacts with kif2c and kif11. Phosphorylated. Autophosphorylated on a serine residue.

The protein resides in the cytoplasm. The protein localises to the cytoskeleton. It localises to the spindle pole. It is found in the microtubule organizing center. Its subcellular location is the centrosome. It carries out the reaction L-seryl-[protein] + ATP = O-phospho-L-seryl-[protein] + ADP + H(+). It catalyses the reaction L-threonyl-[protein] + ATP = O-phospho-L-threonyl-[protein] + ADP + H(+). Functionally, mitotic serine/threonine kinases that contributes to the regulation of cell cycle progression. Associates with the centrosome and the spindle microtubules during mitosis and plays a critical role in various mitotic events including the establishment of mitotic spindle, centrosome duplication, centrosome separation as well as maturation, chromosomal alignment, spindle assembly checkpoint, and cytokinesis. Phosphorylates numerous target proteins. Important for microtubule formation and/or stabilization. This chain is Aurora kinase A-B (aurka-b), found in Xenopus laevis (African clawed frog).